The sequence spans 576 residues: Eukaryotic translation initiation factor 2A (576 aa).

WD repeat units follow at residues Leu71–Ser119, Asp266–Ile307, Pro308–Thr349, and Val351–Glu396. Disordered stretches follow at residues Ser422–Thr461 and Gly475–Lys505. The segment covering Gly475–Gln486 has biased composition (polar residues).

Belongs to the WD repeat EIF2A family.

The protein resides in the cytoplasm. In terms of biological role, functions in the early steps of protein synthesis of a small number of specific mRNAs. Acts by directing the binding of methionyl-tRNAi to 40S ribosomal subunits. In contrast to the eIF-2 complex, it binds methionyl-tRNAi to 40S subunits in a codon-dependent manner, whereas the eIF-2 complex binds methionyl-tRNAi to 40S subunits in a GTP-dependent manner. The chain is Eukaryotic translation initiation factor 2A from Schizosaccharomyces pombe (strain 972 / ATCC 24843) (Fission yeast).